A 149-amino-acid chain; its full sequence is Calmodulin (149 aa).

Ala2 bears the N-acetylalanine mark. EF-hand domains are found at residues 8-43 (EQIAEFKEAFSLFDKDGDGTITTKELGTVMRSLGQN), 44-79 (PTEAELLVMINEVDADGNGTIDFPEFLTMMARKMKD), 81-116 (DSEEEIKEAFKVFDKDGNGYISAAELRHVMTNLGEK), and 117-149 (LSEDEVEEMIREADVDGDGQINYEEFVKMMMSK). Ca(2+) is bound by residues Asp21, Asp23, Asp25, Thr27, Glu32, Asp57, Asp59, Asn61, Thr63, Glu68, Asp94, Asp96, Asn98, Tyr100, Glu105, Asp130, Asp132, Asp134, Gln136, and Glu141.

This sequence belongs to the calmodulin family.

Functionally, calmodulin mediates the control of a large number of enzymes, ion channels and other proteins by Ca(2+). Among the enzymes to be stimulated by the calmodulin-Ca(2+) complex are a number of protein kinases and phosphatases. This is Calmodulin (CMD1) from Blastocladiella emersonii (Aquatic fungus).